A 263-amino-acid polypeptide reads, in one-letter code: Hydroxyethylthiazole kinase (263 aa).

Methionine 41 provides a ligand contact to substrate. Arginine 117 and serine 163 together coordinate ATP. Alanine 190 contacts substrate.

The protein belongs to the Thz kinase family. Mg(2+) serves as cofactor.

It catalyses the reaction 5-(2-hydroxyethyl)-4-methylthiazole + ATP = 4-methyl-5-(2-phosphooxyethyl)-thiazole + ADP + H(+). The protein operates within cofactor biosynthesis; thiamine diphosphate biosynthesis; 4-methyl-5-(2-phosphoethyl)-thiazole from 5-(2-hydroxyethyl)-4-methylthiazole: step 1/1. Functionally, catalyzes the phosphorylation of the hydroxyl group of 4-methyl-5-beta-hydroxyethylthiazole (THZ). This is Hydroxyethylthiazole kinase from Haemophilus influenzae (strain PittEE).